The primary structure comprises 127 residues: Large ribosomal subunit protein bL12c (127 aa).

The tract at residues 104-127 (GVAKDAAEEAKKQIEDAGGKASLK) is disordered. The span at 105–121 (VAKDAAEEAKKQIEDAG) shows a compositional bias: basic and acidic residues.

Belongs to the bacterial ribosomal protein bL12 family. Homodimer. Part of the ribosomal stalk of the 50S ribosomal subunit. Forms a multimeric L10(L12)X complex, where L10 forms an elongated spine to which 2 to 4 L12 dimers bind in a sequential fashion. Binds GTP-bound translation factors.

The protein localises to the plastid. The protein resides in the chloroplast. In terms of biological role, forms part of the ribosomal stalk which helps the ribosome interact with GTP-bound translation factors. Is thus essential for accurate translation. The chain is Large ribosomal subunit protein bL12c from Trieres chinensis (Marine centric diatom).